A 793-amino-acid chain; its full sequence is Nuclear cap-binding protein subunit 1 (793 aa).

Disordered stretches follow at residues 1-30 (MSRR…SEIE) and 668-692 (LARQ…GPLE). One can recognise an MIF4G domain in the interval 30 to 242 (EERLESLICR…CLWSQIQKLK (213 aa)). The span at 683-692 (SSDREDGPLE) shows a compositional bias: basic and acidic residues. Positions 686–716 (REDGPLEEQIERLQEKVESAQSEQKNLFLVI) form a coiled coil.

Belongs to the NCBP1 family. Component of the nuclear cap-binding complex (CBC), a heterodimer composed of NCBP1/CBP80 and NCBP2/CBP20 that interacts with m7GpppG-capped RNA. Component of an alternative nuclear cap-binding complex (CBC) composed of NCBP1/CBP80 and NCBP3.

It localises to the nucleus. The protein localises to the cytoplasm. In terms of biological role, component of the cap-binding complex (CBC), which binds cotranscriptionally to the 5'-cap of pre-mRNAs and is involved in various processes such as pre-mRNA splicing, translation regulation, nonsense-mediated mRNA decay, RNA-mediated gene silencing (RNAi) by microRNAs (miRNAs) and mRNA export. The CBC complex is involved in mRNA export from the nucleus, leading to the recruitment of the mRNA export machinery to the 5'-end of mRNA and to mRNA export in a 5' to 3' direction through the nuclear pore. The CBC complex is also involved in mediating U snRNA and intronless mRNAs export from the nucleus. The CBC complex is essential for a pioneer round of mRNA translation, before steady state translation when the CBC complex is replaced by cytoplasmic cap-binding protein eIF4E. The pioneer round of mRNA translation mediated by the CBC complex plays a central role in nonsense-mediated mRNA decay (NMD), NMD only taking place in mRNAs bound to the CBC complex, but not on eIF4E-bound mRNAs. The CBC complex enhances NMD in mRNAs containing at least one exon-junction complex (EJC), promoting the interaction between UPF1 and UPF2. The CBC complex is also involved in 'failsafe' NMD, which is independent of the EJC complex, while it does not participate in Staufen-mediated mRNA decay (SMD). During cell proliferation, the CBC complex is also involved in microRNAs (miRNAs) biogenesis via its interaction with SRRT/ARS2 and is required for miRNA-mediated RNA interference. The CBC complex also acts as a negative regulator of PARN, thereby acting as an inhibitor of mRNA deadenylation. In the CBC complex, NCBP1/CBP80 does not bind directly capped RNAs (m7GpppG-capped RNA) but is required to stabilize the movement of the N-terminal loop of NCBP2/CBP20 and lock the CBC into a high affinity cap-binding state with the cap structure. Associates with NCBP3 to form an alternative cap-binding complex (CBC) which plays a key role in mRNA export. The conventional CBC with NCBP2 binds both small nuclear RNA (snRNA) and messenger (mRNA) and is involved in their export from the nucleus whereas the alternative CBC with NCBP3 does not bind snRNA and associates only with mRNA thereby playing a role only in mRNA export. This chain is Nuclear cap-binding protein subunit 1 (NCBP1), found in Gallus gallus (Chicken).